The sequence spans 175 residues: RNA pyrophosphohydrolase (175 aa).

The Nudix hydrolase domain maps to 6–149 (GYRPNVGIVI…KRDVYRRVMK (144 aa)). The short motif at 38 to 59 (GGINPGETPEQAMYRELFEEVG) is the Nudix box element.

The protein belongs to the Nudix hydrolase family. RppH subfamily. A divalent metal cation is required as a cofactor.

In terms of biological role, accelerates the degradation of transcripts by removing pyrophosphate from the 5'-end of triphosphorylated RNA, leading to a more labile monophosphorylated state that can stimulate subsequent ribonuclease cleavage. The sequence is that of RNA pyrophosphohydrolase from Yersinia enterocolitica serotype O:8 / biotype 1B (strain NCTC 13174 / 8081).